Here is a 302-residue protein sequence, read N- to C-terminus: Transcription factor bHLH7 (302 aa).

Positions 124–154 are disordered; the sequence is QPMSQPAPPMPHQQSTIRPRVRARRGQATDP. One can recognise a bHLH domain in the interval 150 to 199; the sequence is QATDPHSIAERLRRERIAERIRSLQELVPTVNKTDRAAMIDEIVDYVKFL.

As to quaternary structure, homodimer. As to expression, expressed constitutively in roots, leaves, stems and flowers.

It localises to the nucleus. This is Transcription factor bHLH7 (BHLH7) from Arabidopsis thaliana (Mouse-ear cress).